The following is a 428-amino-acid chain: Beta-1,3-galactosyl-O-glycosyl-glycoprotein beta-1,6-N-acetylglucosaminyltransferase 4 (428 aa).

Residues 1 to 12 are Cytoplasmic-facing; that stretch reads MRRCAVLHRLRC. Residues 13 to 30 form a helical; Signal-anchor for type II membrane protein membrane-spanning segment; the sequence is KFYVFVVSLFVVVKLVYL. Residues 31–428 lie on the Lumenal side of the membrane; it reads KISMDNSIYI…QLQQCLRRVS (398 aa). An N-linked (GlcNAc...) asparagine glycan is attached at Asn59. Cystine bridges form between Cys60/Cys214, Cys148/Cys369, Cys169/Cys196, and Cys378/Cys410.

It belongs to the glycosyltransferase 14 family.

It localises to the golgi apparatus membrane. It catalyses the reaction a 3-O-[beta-D-galactosyl-(1-&gt;3)-N-acetyl-alpha-D-galactosaminyl]-L-seryl-[protein] + UDP-N-acetyl-alpha-D-glucosamine = 3-O-{beta-D-galactosyl-(1-&gt;3)-[N-acetyl-beta-D-glucosaminyl-(1-&gt;6)]-N-acetyl-alpha-D-galactosaminyl}-L-seryl-[protein] + UDP + H(+). The enzyme catalyses a 3-O-[beta-D-galactosyl-(1-&gt;3)-N-acetyl-alpha-D-galactosaminyl]-L-threonyl-[protein] + UDP-N-acetyl-alpha-D-glucosamine = a 3-O-{beta-D-galactosyl-(1-&gt;3)-[N-acetyl-beta-D-glucosaminyl-(1-&gt;6)]-N-acetyl-alpha-D-galactosaminyl}-L-threonyl-[protein] + UDP + H(+). The protein operates within protein modification; protein glycosylation. Glycosyltransferase that mediates core 2 O-glycan branching, an important step in mucin-type biosynthesis. In Danio rerio (Zebrafish), this protein is Beta-1,3-galactosyl-O-glycosyl-glycoprotein beta-1,6-N-acetylglucosaminyltransferase 4 (gcnt4).